The sequence spans 151 residues: SsrA-binding protein (151 aa).

It belongs to the SmpB family.

It is found in the cytoplasm. Its function is as follows. Required for rescue of stalled ribosomes mediated by trans-translation. Binds to transfer-messenger RNA (tmRNA), required for stable association of tmRNA with ribosomes. tmRNA and SmpB together mimic tRNA shape, replacing the anticodon stem-loop with SmpB. tmRNA is encoded by the ssrA gene; the 2 termini fold to resemble tRNA(Ala) and it encodes a 'tag peptide', a short internal open reading frame. During trans-translation Ala-aminoacylated tmRNA acts like a tRNA, entering the A-site of stalled ribosomes, displacing the stalled mRNA. The ribosome then switches to translate the ORF on the tmRNA; the nascent peptide is terminated with the 'tag peptide' encoded by the tmRNA and targeted for degradation. The ribosome is freed to recommence translation, which seems to be the essential function of trans-translation. In Chlamydia pneumoniae (Chlamydophila pneumoniae), this protein is SsrA-binding protein.